Here is a 142-residue protein sequence, read N- to C-terminus: Hemoglobin subunit alpha-A (142 aa).

The 141-residue stretch at 2–142 (VLSAADKTNV…VGAVLTAKYR (141 aa)) folds into the Globin domain. His59 lines the O2 pocket. His88 contributes to the heme b binding site.

This sequence belongs to the globin family. Heterotetramer of two alpha chains and two beta chains. Red blood cells.

Involved in oxygen transport from the lung to the various peripheral tissues. The chain is Hemoglobin subunit alpha-A (HBAA) from Mareca penelope (Eurasian wigeon).